The chain runs to 179 residues: Viral interleukin-10 homolog (179 aa).

Residues 1-18 (MFRASLLCCLVLLAGVWA) form the signal peptide. Intrachain disulfides connect Cys-30–Cys-127 and Cys-80–Cys-133. 2 N-linked (GlcNAc...) asparagine; by host glycosylation sites follow: Asn-100 and Asn-135.

Belongs to the IL-10 family.

The protein resides in the secreted. Functionally, down-regulates the expression of the TAP1 gene (transporter associated with antigen processing), thereby affecting the transport of peptides into the endoplasmic reticulum and subsequent peptide loading by MHC class I molecules. In consequence, infected cells are masked for immune recognition by cytotoxic T-lymphocytes. This Equus caballus (Horse) protein is Viral interleukin-10 homolog.